Reading from the N-terminus, the 730-residue chain is Dual function macrocyclase-peptidase POPB (730 aa).

Active-site charge relay system residues include Ser577, Asp661, and His698.

It belongs to the peptidase S9A family. Monomer. As to expression, expressed in the pileus (cap) and lamellae where it colocalizes with amanitin.

It carries out the reaction Hydrolysis of Pro-|-Xaa &gt;&gt; Ala-|-Xaa in oligopeptides.. In terms of biological role, dual function macrocyclase-peptidase involved in the biosynthesis of the highly toxic amanitin toxin family of macrocycles. Cleaves peptide bonds on the C-terminal side of prolyl residues. The enzyme first removes 10 residues from the N-terminus of a 35-residue substrate. Conformational trapping of the 25 amino-acid peptide forces the enzyme to release this intermediate rather than proceed to macrocyclization. The enzyme rebinds the 25 amino-acid peptide in a different conformation and catalyzes macrocyclization of the N-terminal eight residues. The chain is Dual function macrocyclase-peptidase POPB from Amanita bisporigera (Destroying angel).